The chain runs to 165 residues: Xanthine-guanine phosphoribosyltransferase (165 aa).

Residues 41-42 and 98-106 contribute to the 5-phospho-alpha-D-ribose 1-diphosphate site; these read RG and DDLTDTGKT. Asp-99 lines the Mg(2+) pocket. Residues Asp-102 and Ile-145 each contribute to the guanine site. Xanthine is bound by residues Asp-102 and Ile-145. GMP is bound by residues 102-106 and 144-145; these read DTGKT and WI.

This sequence belongs to the purine/pyrimidine phosphoribosyltransferase family. XGPT subfamily. Homotetramer. Mg(2+) serves as cofactor.

It is found in the cell inner membrane. The enzyme catalyses GMP + diphosphate = guanine + 5-phospho-alpha-D-ribose 1-diphosphate. It carries out the reaction XMP + diphosphate = xanthine + 5-phospho-alpha-D-ribose 1-diphosphate. The catalysed reaction is IMP + diphosphate = hypoxanthine + 5-phospho-alpha-D-ribose 1-diphosphate. Its pathway is purine metabolism; GMP biosynthesis via salvage pathway; GMP from guanine: step 1/1. It participates in purine metabolism; XMP biosynthesis via salvage pathway; XMP from xanthine: step 1/1. Functionally, purine salvage pathway enzyme that catalyzes the transfer of the ribosyl-5-phosphate group from 5-phospho-alpha-D-ribose 1-diphosphate (PRPP) to the N9 position of the 6-oxopurines guanine and xanthine to form the corresponding ribonucleotides GMP (guanosine 5'-monophosphate) and XMP (xanthosine 5'-monophosphate), with the release of PPi. To a lesser extent, also acts on hypoxanthine. In Brucella anthropi (strain ATCC 49188 / DSM 6882 / CCUG 24695 / JCM 21032 / LMG 3331 / NBRC 15819 / NCTC 12168 / Alc 37) (Ochrobactrum anthropi), this protein is Xanthine-guanine phosphoribosyltransferase.